A 178-amino-acid polypeptide reads, in one-letter code: Large ribosomal subunit protein bL25 (178 aa).

The protein belongs to the bacterial ribosomal protein bL25 family. CTC subfamily. In terms of assembly, part of the 50S ribosomal subunit; part of the 5S rRNA/L5/L18/L25 subcomplex. Contacts the 5S rRNA. Binds to the 5S rRNA independently of L5 and L18.

Functionally, this is one of the proteins that binds to the 5S RNA in the ribosome where it forms part of the central protuberance. The chain is Large ribosomal subunit protein bL25 from Campylobacter hominis (strain ATCC BAA-381 / DSM 21671 / CCUG 45161 / LMG 19568 / NCTC 13146 / CH001A).